Here is a 182-residue protein sequence, read N- to C-terminus: MFKYIGDIVKGTGTQLRSLAMVFSHGFRKRDTLQYPEEPVYLPPRYRGRIVLTRDPDGEERCVACNLCAVACPVGCISLQKAETEDGRWYPEFFRINFSRCIFCGLCEEACPTTAIQLTPDFEMAEFKRQDLVYEKEDLLISGPGKNPDYNFYRVAGMAIAGKPKGSAQNEAEPINVKSLLP.

4Fe-4S ferredoxin-type domains follow at residues 52–82 (LTRDPDGEERCVACNLCAVACPVGCISLQKA) and 92–121 (EFFRINFSRCIFCGLCEEACPTTAIQLTPD). The [4Fe-4S] cluster site is built by cysteine 62, cysteine 65, cysteine 68, cysteine 72, cysteine 101, cysteine 104, cysteine 107, and cysteine 111.

Belongs to the complex I 23 kDa subunit family. As to quaternary structure, NDH-1 is composed of 13 different subunits. Subunits NuoA, H, J, K, L, M, N constitute the membrane sector of the complex. The cofactor is [4Fe-4S] cluster.

The protein resides in the cell inner membrane. The catalysed reaction is a quinone + NADH + 5 H(+)(in) = a quinol + NAD(+) + 4 H(+)(out). In terms of biological role, NDH-1 shuttles electrons from NADH, via FMN and iron-sulfur (Fe-S) centers, to quinones in the respiratory chain. The immediate electron acceptor for the enzyme in this species is believed to be ubiquinone. Couples the redox reaction to proton translocation (for every two electrons transferred, four hydrogen ions are translocated across the cytoplasmic membrane), and thus conserves the redox energy in a proton gradient. The protein is NADH-quinone oxidoreductase subunit I of Pseudomonas putida (strain ATCC 47054 / DSM 6125 / CFBP 8728 / NCIMB 11950 / KT2440).